Consider the following 160-residue polypeptide: Nucleotide-binding protein Tgr7_1196 (160 aa).

Belongs to the YajQ family.

In terms of biological role, nucleotide-binding protein. This chain is Nucleotide-binding protein Tgr7_1196, found in Thioalkalivibrio sulfidiphilus (strain HL-EbGR7).